We begin with the raw amino-acid sequence, 258 residues long: Global transcriptional regulator CodY (258 aa).

A GAF domain region spans residues 1 to 156; it reads MSTLLDKTRK…SATIVGLEIL (156 aa). Residues 204-223 constitute a DNA-binding region (H-T-H motif); the sequence is ASKIADKVGITRSVIVNALR.

This sequence belongs to the CodY family.

The protein resides in the cytoplasm. In terms of biological role, DNA-binding global transcriptional regulator which is involved in the adaptive response to starvation and acts by directly or indirectly controlling the expression of numerous genes in response to nutrient availability. During rapid exponential growth, CodY is highly active and represses genes whose products allow adaptation to nutrient depletion. In Clostridium kluyveri (strain NBRC 12016), this protein is Global transcriptional regulator CodY.